The following is a 360-amino-acid chain: Glycerol-1-phosphate dehydrogenase [NAD(P)+] (360 aa).

Residues 108–112 (GRVID) and 130–133 (TAAS) each bind NAD(+). Residue aspartate 135 coordinates substrate. Position 139 (serine 139) interacts with NAD(+). Position 182 (aspartate 182) interacts with substrate. Zn(2+) contacts are provided by aspartate 182 and histidine 262. Histidine 266 is a substrate binding site. Histidine 278 provides a ligand contact to Zn(2+).

The protein belongs to the glycerol-1-phosphate dehydrogenase family. Zn(2+) serves as cofactor.

It is found in the cytoplasm. It carries out the reaction sn-glycerol 1-phosphate + NAD(+) = dihydroxyacetone phosphate + NADH + H(+). The enzyme catalyses sn-glycerol 1-phosphate + NADP(+) = dihydroxyacetone phosphate + NADPH + H(+). The protein operates within membrane lipid metabolism; glycerophospholipid metabolism. In terms of biological role, catalyzes the NAD(P)H-dependent reduction of dihydroxyacetonephosphate (DHAP or glycerone phosphate) to glycerol 1-phosphate (G1P). The G1P thus generated is used as the glycerophosphate backbone of phospholipids in the cellular membranes of Archaea. This Methanoculleus marisnigri (strain ATCC 35101 / DSM 1498 / JR1) protein is Glycerol-1-phosphate dehydrogenase [NAD(P)+].